The primary structure comprises 146 residues: Large ribosomal subunit protein uL15 (146 aa).

A compositionally biased stretch (basic and acidic residues) spans 1–13 (MKLHELKAAEGSR). Residues 1–51 (MKLHELKAAEGSRKVRNRVGRGTSSGNGKTSGRGQKGQKARSGGGVRLGFE) form a disordered region. 2 stretches are compositionally biased toward gly residues: residues 23–35 (TSSG…GRGQ) and 42–51 (SGGGVRLGFE).

The protein belongs to the universal ribosomal protein uL15 family. In terms of assembly, part of the 50S ribosomal subunit.

In terms of biological role, binds to the 23S rRNA. The chain is Large ribosomal subunit protein uL15 from Streptococcus pyogenes serotype M1.